Reading from the N-terminus, the 318-residue chain is uncharacterized protein (318 aa).

It to E.coli YfaT and P.aeruginosa PA4490.

This is an uncharacterized protein from Thermotoga maritima (strain ATCC 43589 / DSM 3109 / JCM 10099 / NBRC 100826 / MSB8).